The primary structure comprises 213 residues: Holliday junction branch migration complex subunit RuvA (213 aa).

A domain I region spans residues 1-63 (MIGMLTGRVA…EDAFKLYGFL (63 aa)). Positions 64 to 142 (DDIDRAWFVH…PTGRSFSIGL (79 aa)) are domain II. Residues 143–160 (PVHSDDGTTGGAPVAPAG) are flexible linker. The tract at residues 161–213 (GDSLAREDAVSALVNLGYNESQARQAVAKILRDADSEAPLGDVIRLSLKELAA) is domain III.

It belongs to the RuvA family. Homotetramer. Forms an RuvA(8)-RuvB(12)-Holliday junction (HJ) complex. HJ DNA is sandwiched between 2 RuvA tetramers; dsDNA enters through RuvA and exits via RuvB. An RuvB hexamer assembles on each DNA strand where it exits the tetramer. Each RuvB hexamer is contacted by two RuvA subunits (via domain III) on 2 adjacent RuvB subunits; this complex drives branch migration. In the full resolvosome a probable DNA-RuvA(4)-RuvB(12)-RuvC(2) complex forms which resolves the HJ.

Its subcellular location is the cytoplasm. Its function is as follows. The RuvA-RuvB-RuvC complex processes Holliday junction (HJ) DNA during genetic recombination and DNA repair, while the RuvA-RuvB complex plays an important role in the rescue of blocked DNA replication forks via replication fork reversal (RFR). RuvA specifically binds to HJ cruciform DNA, conferring on it an open structure. The RuvB hexamer acts as an ATP-dependent pump, pulling dsDNA into and through the RuvAB complex. HJ branch migration allows RuvC to scan DNA until it finds its consensus sequence, where it cleaves and resolves the cruciform DNA. In Maricaulis maris (strain MCS10) (Caulobacter maris), this protein is Holliday junction branch migration complex subunit RuvA.